A 160-amino-acid polypeptide reads, in one-letter code: MANDRVPMTPAGEQALRAELDKLKKIERPAIIEAIAEARDHGDLKENAEYHAARERQGIIEGRIKDIESKLSNAQVIDVTKIQANGMVIFGATVTIMNVDTEEETTYKIVGEDEADIDNQKISVVAPLARALIKKEEGDEITLDTPKGKVTYEIVAVEYK.

The protein belongs to the GreA/GreB family.

Its function is as follows. Necessary for efficient RNA polymerase transcription elongation past template-encoded arresting sites. The arresting sites in DNA have the property of trapping a certain fraction of elongating RNA polymerases that pass through, resulting in locked ternary complexes. Cleavage of the nascent transcript by cleavage factors such as GreA or GreB allows the resumption of elongation from the new 3'terminus. GreA releases sequences of 2 to 3 nucleotides. This chain is Transcription elongation factor GreA, found in Francisella tularensis subsp. tularensis (strain FSC 198).